We begin with the raw amino-acid sequence, 376 residues long: MEENSIKIHKWLYPASWLYGAGVALRNKLFDWGKLQSKSFNVPIICIGNIAVGGTGKTPHTEYLIKLLHDEFQVAVLSRGYKRHTKGFILSTAESDARSIGDEPYQIQSKFSDIRVAVDEDRCHGIERLLTLKEPPVEVILLDDAFQHRYVKAGLNILLTDYHRLFCDDTLMPAGRLREPAQGKNRAQIVIVTKCPPDIKPIDYNIITKRLNLFPYQQLYFSSFRYGNLRAVFPDCATVQERKLSSLQTEEQILLITGIASPDTIIRELEIHTRNIDLLAFSDHHNFSQRDLAQIKERFGKLRKGQRLIVTTEKDATRLICHQELDEGLKPFIYALPIEVEILQNQQDNFNQHIIGYVRENTRNGSLPERKDAHKS.

51–58 (AVGGTGKT) is an ATP binding site.

The protein belongs to the LpxK family.

It carries out the reaction a lipid A disaccharide + ATP = a lipid IVA + ADP + H(+). Its pathway is glycolipid biosynthesis; lipid IV(A) biosynthesis; lipid IV(A) from (3R)-3-hydroxytetradecanoyl-[acyl-carrier-protein] and UDP-N-acetyl-alpha-D-glucosamine: step 6/6. In terms of biological role, transfers the gamma-phosphate of ATP to the 4'-position of a tetraacyldisaccharide 1-phosphate intermediate (termed DS-1-P) to form tetraacyldisaccharide 1,4'-bis-phosphate (lipid IVA). This chain is Tetraacyldisaccharide 4'-kinase, found in Bacteroides fragilis (strain ATCC 25285 / DSM 2151 / CCUG 4856 / JCM 11019 / LMG 10263 / NCTC 9343 / Onslow / VPI 2553 / EN-2).